The following is a 340-amino-acid chain: Phosphoribosylformylglycinamidine cyclo-ligase (340 aa).

Belongs to the AIR synthase family.

It localises to the cytoplasm. It carries out the reaction 2-formamido-N(1)-(5-O-phospho-beta-D-ribosyl)acetamidine + ATP = 5-amino-1-(5-phospho-beta-D-ribosyl)imidazole + ADP + phosphate + H(+). The protein operates within purine metabolism; IMP biosynthesis via de novo pathway; 5-amino-1-(5-phospho-D-ribosyl)imidazole from N(2)-formyl-N(1)-(5-phospho-D-ribosyl)glycinamide: step 2/2. This is Phosphoribosylformylglycinamidine cyclo-ligase from Streptococcus pneumoniae (strain CGSP14).